Here is a 137-residue protein sequence, read N- to C-terminus: Envelope glycoprotein L (137 aa).

An N-terminal signal peptide occupies residues 1–22 (MRAVGVFLAICLVTIFVLPTWG). The tract at residues 23–128 (NWAYPCCHVT…SVEDLFGANL (106 aa)) is interaction with gH. Disulfide bonds link Cys-28–Cys-56 and Cys-29–Cys-79.

It belongs to the herpesviridae glycoprotein L family. In terms of assembly, interacts with glycoprotein H (gH); this interaction is necessary for the correct processing and cell surface expression of gH. The heterodimer gH/gL seems to interact with gB trimers during fusion. The heterodimer gH/gL interacts with host EPHA2 to facilitate virus internalization and fusion.

The protein resides in the virion membrane. It is found in the host cell membrane. Its subcellular location is the host Golgi apparatus. The protein localises to the host trans-Golgi network. Its function is as follows. The heterodimer glycoprotein H-glycoprotein L is required for the fusion of viral and plasma membranes leading to virus entry into the host cell. Acts as a functional inhibitor of gH and maintains gH in an inhibited form. Upon binding to host integrins, gL dissociates from gH leading to activation of the viral fusion glycoproteins gB and gH. Fusion of EBV with B-lymphocytes requires the additional receptor-binding protein gp42, which forms a complex with gH/gL. The heterodimer gH/gL targets also host EPHA2 to promote viral entry. This chain is Envelope glycoprotein L, found in Homo sapiens (Human).